Here is a 90-residue protein sequence, read N- to C-terminus: Putative membrane protein insertion efficiency factor (90 aa).

Belongs to the UPF0161 family.

The protein localises to the cell membrane. In terms of biological role, could be involved in insertion of integral membrane proteins into the membrane. The protein is Putative membrane protein insertion efficiency factor of Lactococcus lactis subsp. cremoris (strain SK11).